An 855-amino-acid polypeptide reads, in one-letter code: MSQPYLKIAILVAATIVSAIPVWTTPVSTSPPQQTKLHYVGNGTWVHNNTFNVTRYDRITMEPVYNNNLSSTTFFVAISERNFRTVNTPLGASVFWILKSALNPPKHQPCIANVPEPGDPRGPCVNSTVSLFFNDNLEPFLMTKNLLEFEVLPDNYITGWTFERSKTVATKGNPVGVVLSPPRTSPDVNNTIRDDGTPKQHLSIIDEHTTFVLDLQNFTKTLTYISPFAAVWPITAFHAGITVMGCDTTQAIAYLGNGFMGLQISSVNNPPLEMIVAPNDVRARIVNRLPPRRRLEPPGPYAGPIYKVYVLSDGNFYLGHGMSKISREVAAYPEESLDYRYHLSLANLDTLAMLAELSSGKSKDVSYYLYRIIARLAVATFSLAEVIRLSDYMLLQEAIDVDINLRLIVPLVMKYAAGGTADSSYTSSDVAMDQFEVAQAQIEKIVADINIENELRKPMYEHRSLLKSVYAYSRKPLPNAVSFANRLITAMYKEAIKDRITWNSTMREVLFFAVGAAAGSHVILTDGPDLGLHAHKDSSMFLSLNRNILLLCTAMCTASHAVSAGVKLEEVMAGLIAGGVQFSLLEVFSPCMASARFDLAEEEHVLDLLSVIPPRLYTDLNTGLEDDGTTIHSYGRSANGILNSRIAYNFDAVRVFTPELASCSTKLPKVLVVLPLASNRSYVITRTAPNIGLTYSLDGVNIAKPIVISYITYGNCQVSRATIRSVYLDHPGHTQSCVYCGSVFMRYMASGAIMDLIYIDDKDVELQLVAGENSTIPAFNPKLYTPSMNALLMFPNGTVTLMSAFASYSAFKIPSTYLWASIGGLLLAILILYVIVKMLCGGVINNDYSLLLNSE.

An N-terminal signal peptide occupies residues 1-19 (MSQPYLKIAILVAATIVSA). Topologically, residues 20-815 (IPVWTTPVST…ASYSAFKIPS (796 aa)) are virion surface. Asn42, Asn48, Asn52, Asn68, Asn126, Asn189, and Asn217 each carry an N-linked (GlcNAc...) asparagine; by host glycan. The tract at residues 174-195 (PVGVVLSPPRTSPDVNNTIRDD) is disordered. The interaction with gL stretch occupies residues 247–310 (DTTQAIAYLG…YAGPIYKVYV (64 aa)). N-linked (GlcNAc...) asparagine; by host glycosylation is found at Asn503, Asn679, Asn773, and Asn796. The chain crosses the membrane as a helical span at residues 816–836 (TYLWASIGGLLLAILILYVIV). Topologically, residues 837-855 (KMLCGGVINNDYSLLLNSE) are intravirion.

The protein belongs to the herpesviridae glycoprotein H family. As to quaternary structure, interacts with glycoprotein L (gL); this interaction is necessary for the correct processing and cell surface expression of gH. The heterodimer gH/gL seems to interact with gB trimers during fusion. N-glycosylated, O-glycosylated, and sialylated.

The protein localises to the virion membrane. It is found in the host cell membrane. The protein resides in the host endosome membrane. Functionally, the heterodimer glycoprotein H-glycoprotein L is required for the fusion of viral and plasma membranes leading to virus entry into the host cell. Following initial binding to host receptor, membrane fusion is mediated by the fusion machinery composed of gB and the heterodimer gH/gL. May also be involved in the fusion between the virion envelope and the outer nuclear membrane during virion morphogenesis. This is Envelope glycoprotein H from Equine herpesvirus 4 (strain 1942) (EHV-4).